The chain runs to 104 residues: Integration host factor subunit beta (104 aa).

This sequence belongs to the bacterial histone-like protein family. Heterodimer of an alpha and a beta chain.

Its function is as follows. This protein is one of the two subunits of integration host factor, a specific DNA-binding protein that functions in genetic recombination as well as in transcriptional and translational control. The protein is Integration host factor subunit beta (ihfB) of Neisseria gonorrhoeae.